A 248-amino-acid polypeptide reads, in one-letter code: Pulmonary surfactant-associated protein A (248 aa).

The signal sequence occupies residues M1–C20. Residues G31–P100 form the Collagen-like domain. The segment at G34–E105 is disordered. The segment covering P54–G65 has biased composition (pro residues). Over residues E84 to E93 the composition is skewed to basic and acidic residues. One can recognise a C-type lectin domain in the interval V134–E247. Disulfide bonds link C155/C246 and C224/C238. N207 carries N-linked (GlcNAc...) asparagine glycosylation. Ca(2+) is bound by residues E215, R217, N234, and D235.

This sequence belongs to the SFTPA family. As to quaternary structure, oligomeric complex of 6 set of homotrimers.

The protein localises to the secreted. The protein resides in the extracellular space. Its subcellular location is the extracellular matrix. It localises to the surface film. In terms of biological role, in presence of calcium ions, it binds to surfactant phospholipids and contributes to lower the surface tension at the air-liquid interface in the alveoli of the mammalian lung and is essential for normal respiration. Enhances the expression of MYO18A/SP-R210 on alveolar macrophages. This chain is Pulmonary surfactant-associated protein A (SFTPA1), found in Equus caballus (Horse).